Reading from the N-terminus, the 204-residue chain is ATP phosphoribosyltransferase (204 aa).

This sequence belongs to the ATP phosphoribosyltransferase family. Short subfamily.

Its subcellular location is the cytoplasm. The catalysed reaction is 1-(5-phospho-beta-D-ribosyl)-ATP + diphosphate = 5-phospho-alpha-D-ribose 1-diphosphate + ATP. The protein operates within amino-acid biosynthesis; L-histidine biosynthesis; L-histidine from 5-phospho-alpha-D-ribose 1-diphosphate: step 1/9. Its function is as follows. Catalyzes the condensation of ATP and 5-phosphoribose 1-diphosphate to form N'-(5'-phosphoribosyl)-ATP (PR-ATP). Has a crucial role in the pathway because the rate of histidine biosynthesis seems to be controlled primarily by regulation of HisG enzymatic activity. In Pyrococcus furiosus (strain ATCC 43587 / DSM 3638 / JCM 8422 / Vc1), this protein is ATP phosphoribosyltransferase (hisG).